Here is a 190-residue protein sequence, read N- to C-terminus: Female-specific histamine-binding protein 2 (190 aa).

The N-terminal stretch at 1–19 is a signal peptide; sequence MKLLILSLALVLALSQVKG. Histamine-binding residues include Ser-39, Asp-43, Tyr-55, Asp-58, Trp-61, Glu-101, Phe-117, Tyr-119, Phe-127, Asp-139, Glu-154, and Trp-156. Disulfide bonds link Cys-67–Cys-188 and Cys-138–Cys-167.

Belongs to the calycin superfamily. Histamine-binding salivary protein family. As to quaternary structure, monomer. In terms of tissue distribution, expressed in salivary glands.

The protein resides in the secreted. Functionally, salivary tick protein that acts by scavenging histamine at the wound site, outcompeting histamine receptors for histamine, thereby overcoming host inflammatory responses. Binds histamine with a high-affinity (Kd=1.7 nM). Contains two binding histamine sites (H and L), that appear to bind histamine with differing affinities (high and low). The chain is Female-specific histamine-binding protein 2 from Rhipicephalus appendiculatus (Brown ear tick).